We begin with the raw amino-acid sequence, 744 residues long: 1,4-alpha-glucan branching enzyme GlgB (744 aa).

Residues 1–23 form a disordered region; that stretch reads MSGPEDPADRRHGEVPAPRRDIP. Positions 7 to 23 are enriched in basic and acidic residues; it reads PADRRHGEVPAPRRDIP. D424 acts as the Nucleophile in catalysis. Residue E476 is the Proton donor of the active site.

The protein belongs to the glycosyl hydrolase 13 family. GlgB subfamily. As to quaternary structure, monomer.

It catalyses the reaction Transfers a segment of a (1-&gt;4)-alpha-D-glucan chain to a primary hydroxy group in a similar glucan chain.. It participates in glycan biosynthesis; glycogen biosynthesis. Its function is as follows. Catalyzes the formation of the alpha-1,6-glucosidic linkages in glycogen by scission of a 1,4-alpha-linked oligosaccharide from growing alpha-1,4-glucan chains and the subsequent attachment of the oligosaccharide to the alpha-1,6 position. This is 1,4-alpha-glucan branching enzyme GlgB from Nocardia farcinica (strain IFM 10152).